Consider the following 261-residue polypeptide: High-affinity zinc uptake system membrane protein ZnuB (261 aa).

Residues 1 to 7 (MIELLFP) are Periplasmic-facing. Residues 8 to 28 (GWLAGIMLACAAGPLGSFVVW) form a helical membrane-spanning segment. At 29-53 (RRMSYFGDTLAHASLLGVAFGLLLD) the chain is on the cytoplasmic side. A helical transmembrane segment spans residues 54–74 (VNPFYAVIAVTLLLAGGLVWL). Over 75 to 83 (EKRPQLAID) the chain is Periplasmic. Residues 84–104 (TLLGIMAHSALSLGLVVVSLM) form a helical membrane-spanning segment. Over 105–121 (SNIRVDLMAYLFGDLLA) the chain is Cytoplasmic. The chain crosses the membrane as a helical span at residues 122-142 (VTPEDLISIAIGVVIVVAILF). Over 143–177 (WQWRNLLSMTISPDLAFVDGVKLQRVKLLLMLVTA) the chain is Periplasmic. The chain crosses the membrane as a helical span at residues 178-198 (LTIGVAMKFVGALIITSLLII). Residues 199 to 213 (PAATARRFARTPEQM) are Cytoplasmic-facing. A helical membrane pass occupies residues 214–234 (AGVAVLVGMVAVTGGLTFSAV). Residue tyrosine 235 is a topological domain, periplasmic. Residues 236-256 (DTPAGPSVVLCAALLFILSMM) form a helical membrane-spanning segment. Residues 257-261 (KKQAS) lie on the Cytoplasmic side of the membrane.

This sequence belongs to the ABC-3 integral membrane protein family.

It is found in the cell inner membrane. Functionally, involved in the high-affinity zinc uptake transport system. This Escherichia coli (strain K12) protein is High-affinity zinc uptake system membrane protein ZnuB (znuB).